Consider the following 84-residue polypeptide: Gomesin-like peptide (84 aa).

The first 23 residues, 1-23, serve as a signal peptide directing secretion; it reads MNRTRALVCLFLAVLILAHESEA. At Gln24 the chain carries Pyrrolidone carboxylic acid. 2 disulfides stabilise this stretch: Cys25/Cys38 and Cys29/Cys34. Arg41 bears the Arginine amide mark. The propeptide occupies 42 to 84; sequence GKRSVEEPSGGAQVVEKRAVDDADIPSAVEERELDEEESIEFR.

As to expression, expressed by the venom gland.

The protein localises to the secreted. In terms of biological role, antibacterial peptide. The chain is Gomesin-like peptide from Hadronyche infensa (Fraser island funnel-web spider).